The primary structure comprises 361 residues: Queuine tRNA-ribosyltransferase (361 aa).

D92 (proton acceptor) is an active-site residue. Substrate-binding positions include 92–96 (DSGGF), D146, Q189, and G216. The RNA binding stretch occupies residues 247 to 253 (GVGKPAD). D266 (nucleophile) is an active-site residue. Residues 271–275 (TRSGR) are RNA binding; important for wobble base 34 recognition. Zn(2+)-binding residues include C304, C306, C309, and H335.

This sequence belongs to the queuine tRNA-ribosyltransferase family. In terms of assembly, homodimer. Within each dimer, one monomer is responsible for RNA recognition and catalysis, while the other monomer binds to the replacement base PreQ1. Zn(2+) is required as a cofactor.

The enzyme catalyses 7-aminomethyl-7-carbaguanine + guanosine(34) in tRNA = 7-aminomethyl-7-carbaguanosine(34) in tRNA + guanine. Its pathway is tRNA modification; tRNA-queuosine biosynthesis. Catalyzes the base-exchange of a guanine (G) residue with the queuine precursor 7-aminomethyl-7-deazaguanine (PreQ1) at position 34 (anticodon wobble position) in tRNAs with GU(N) anticodons (tRNA-Asp, -Asn, -His and -Tyr). Catalysis occurs through a double-displacement mechanism. The nucleophile active site attacks the C1' of nucleotide 34 to detach the guanine base from the RNA, forming a covalent enzyme-RNA intermediate. The proton acceptor active site deprotonates the incoming PreQ1, allowing a nucleophilic attack on the C1' of the ribose to form the product. After dissociation, two additional enzymatic reactions on the tRNA convert PreQ1 to queuine (Q), resulting in the hypermodified nucleoside queuosine (7-(((4,5-cis-dihydroxy-2-cyclopenten-1-yl)amino)methyl)-7-deazaguanosine). This chain is Queuine tRNA-ribosyltransferase, found in Rickettsia akari (strain Hartford).